Consider the following 205-residue polypeptide: Histidine biosynthesis bifunctional protein HisIE (205 aa).

The phosphoribosyl-AMP cyclohydrolase stretch occupies residues 1 to 116 (MLKLKFNEEG…KVEKPLPFEV (116 aa)). Residues 117-205 (LPRLQDVIRE…VMEELIRRFK (89 aa)) are phosphoribosyl-ATP pyrophosphohydrolase.

It in the N-terminal section; belongs to the PRA-CH family. This sequence in the C-terminal section; belongs to the PRA-PH family.

Its subcellular location is the cytoplasm. The enzyme catalyses 1-(5-phospho-beta-D-ribosyl)-ATP + H2O = 1-(5-phospho-beta-D-ribosyl)-5'-AMP + diphosphate + H(+). It carries out the reaction 1-(5-phospho-beta-D-ribosyl)-5'-AMP + H2O = 1-(5-phospho-beta-D-ribosyl)-5-[(5-phospho-beta-D-ribosylamino)methylideneamino]imidazole-4-carboxamide. The protein operates within amino-acid biosynthesis; L-histidine biosynthesis; L-histidine from 5-phospho-alpha-D-ribose 1-diphosphate: step 2/9. It participates in amino-acid biosynthesis; L-histidine biosynthesis; L-histidine from 5-phospho-alpha-D-ribose 1-diphosphate: step 3/9. This is Histidine biosynthesis bifunctional protein HisIE (hisI) from Aquifex aeolicus (strain VF5).